The following is a 499-amino-acid chain: Gamma-aminobutyric acid receptor subunit beta (499 aa).

An N-terminal signal peptide occupies residues 1–23 (MWGIIVPFFSASLMCSLVAVVRC). At 24 to 251 (QQDTDHFANV…IFQLQRNIGY (228 aa)) the chain is on the extracellular side. Residues N32, N98, N106, and N152 are each glycosylated (N-linked (GlcNAc...) asparagine). Residues C167 and C181 are joined by a disulfide bond. 3 consecutive transmembrane segments (helical) span residues 252–273 (FIFQ…SFWI), 278–299 (TSAR…SNGV), and 311–333 (AIDI…YAAV). Topologically, residues 334-475 (NYTYWGARAK…RVQDVNTIDK (142 aa)) are cytoplasmic. Residues 476–499 (YARLMFPLLFIIFNTSYWSVYLLT) traverse the membrane as a helical segment.

It belongs to the ligand-gated ion channel (TC 1.A.9) family. Gamma-aminobutyric acid receptor (TC 1.A.9.5) subfamily. As to quaternary structure, generally pentameric. There are five types of GABA(A) receptor chains: alpha, beta, gamma, delta, and rho.

Its subcellular location is the postsynaptic cell membrane. The protein resides in the cell membrane. Functionally, GABA, an inhibitory neurotransmitter, mediates neuronal inhibition by binding to the GABA/benzodiazepine receptor and opening an integral chloride channel. The sequence is that of Gamma-aminobutyric acid receptor subunit beta from Lymnaea stagnalis (Great pond snail).